Here is a 229-residue protein sequence, read N- to C-terminus: Potassium/proton antiporter CemA (229 aa).

2 helical membrane passes run 7-27 and 106-126; these read LASL…SISF and IISH…YFIL.

This sequence belongs to the CemA family.

It is found in the plastid. The protein resides in the chloroplast inner membrane. The catalysed reaction is K(+)(in) + H(+)(out) = K(+)(out) + H(+)(in). Functionally, contributes to K(+)/H(+) antiport activity by supporting proton efflux to control proton extrusion and homeostasis in chloroplasts in a light-dependent manner to modulate photosynthesis. Prevents excessive induction of non-photochemical quenching (NPQ) under continuous-light conditions. Indirectly promotes efficient inorganic carbon uptake into chloroplasts. This chain is Potassium/proton antiporter CemA, found in Cycas taitungensis (Prince sago).